A 316-amino-acid chain; its full sequence is UDP-N-acetyl-2-amino-2-deoxy-D-glucuronate oxidase (316 aa).

Residues 11 to 13, 32 to 37, glutamate 55, 81 to 84, 101 to 102, glutamine 130, and 171 to 172 each bind NAD(+); these read GYI, YDINDS, NYLH, EK, and WK.

This sequence belongs to the Gfo/Idh/MocA family. In terms of assembly, homotetramer.

It catalyses the reaction UDP-2-acetamido-2-deoxy-alpha-D-glucuronate + NAD(+) = UDP-2-acetamido-2-deoxy-alpha-D-ribo-hex-3-uluronate + NADH + H(+). The catalysed reaction is 2-hydroxyglutarate + NAD(+) = 2-oxoglutarate + NADH + H(+). It participates in bacterial outer membrane biogenesis; LPS O-antigen biosynthesis. Its function is as follows. Plays a role in the biosynthesis of B-band O antigen for serotype O5. Catalyzes the NAD-dependent oxidation of UDP-N-acetylglucosaminuronic acid (UDP-D-GlcNAcA) to UDP-2-acetamido-2-deoxy-3-oxo-D-glucuronic acid (UDP-3-oxo-D-GlcNAcA). Cannot use UDP-GlcNAc or UDP-GalNAc as the nucleotide sugar substrate, and can use only poorly UDP-D-glucuronic acid (UDP-GlcA). Undergoes an NAD(+) recycling mechanism using 2-oxoglutarate as an oxidant. This Pseudomonas aeruginosa (strain ATCC 15692 / DSM 22644 / CIP 104116 / JCM 14847 / LMG 12228 / 1C / PRS 101 / PAO1) protein is UDP-N-acetyl-2-amino-2-deoxy-D-glucuronate oxidase.